Consider the following 129-residue polypeptide: MSVPAELKYAKSHEWIKLEADGTVTVGITQHAQELLGDMVFVELPKVGRILAQQEDCAVVESVKAASDIYAPLSGEVIAINAEVESSPEKINEDSYSAWLFKLKPANTAEIDGLLDANGYEKLLESDAH.

In terms of domain architecture, Lipoyl-binding spans 23–104; the sequence is TVTVGITQHA…SYSAWLFKLK (82 aa). An N6-lipoyllysine modification is found at lysine 64.

Belongs to the GcvH family. In terms of assembly, the glycine cleavage system is composed of four proteins: P, T, L and H. It depends on (R)-lipoate as a cofactor.

In terms of biological role, the glycine cleavage system catalyzes the degradation of glycine. The H protein shuttles the methylamine group of glycine from the P protein to the T protein. The sequence is that of Glycine cleavage system H protein from Nitrosomonas eutropha (strain DSM 101675 / C91 / Nm57).